Consider the following 383-residue polypeptide: Phospho-N-acetylmuramoyl-pentapeptide-transferase (383 aa).

9 helical membrane-spanning segments follow: residues 26 to 46, 73 to 93, 98 to 118, 131 to 151, 182 to 202, 221 to 241, 258 to 278, 283 to 305, and 360 to 380; these read TAGAVATALILVILFAPGVIE, TMGGIFIVGSILISVLLWAEL, IILLTLSLVILSIAGFLDDFL, IYKIFFQTFVGIIIGVYLYYF, IFLPFASTIYIDLKILYIPFA, GLAIGLLIIMSMALAVLSYVS, AGEVTVFVGALIGAGLGFLWF, AQVFMGDVGSLSLGGVLGIIALF, and QVVFRFYIIGIIMALIGIATL.

Belongs to the glycosyltransferase 4 family. MraY subfamily. The cofactor is Mg(2+).

It localises to the cell inner membrane. The catalysed reaction is UDP-N-acetyl-alpha-D-muramoyl-L-alanyl-gamma-D-glutamyl-meso-2,6-diaminopimeloyl-D-alanyl-D-alanine + di-trans,octa-cis-undecaprenyl phosphate = di-trans,octa-cis-undecaprenyl diphospho-N-acetyl-alpha-D-muramoyl-L-alanyl-D-glutamyl-meso-2,6-diaminopimeloyl-D-alanyl-D-alanine + UMP. It participates in cell wall biogenesis; peptidoglycan biosynthesis. In terms of biological role, catalyzes the initial step of the lipid cycle reactions in the biosynthesis of the cell wall peptidoglycan: transfers peptidoglycan precursor phospho-MurNAc-pentapeptide from UDP-MurNAc-pentapeptide onto the lipid carrier undecaprenyl phosphate, yielding undecaprenyl-pyrophosphoryl-MurNAc-pentapeptide, known as lipid I. The sequence is that of Phospho-N-acetylmuramoyl-pentapeptide-transferase from Brachyspira hyodysenteriae (strain ATCC 49526 / WA1).